Consider the following 37-residue polypeptide: MKVRPSVKPICEKCKVIKRKGKVMVICENPKHKQKQG.

Belongs to the bacterial ribosomal protein bL36 family.

This Clostridioides difficile (strain 630) (Peptoclostridium difficile) protein is Large ribosomal subunit protein bL36.